A 646-amino-acid polypeptide reads, in one-letter code: 1-deoxy-D-xylulose-5-phosphate synthase (646 aa).

Thiamine diphosphate is bound by residues histidine 86 and 127 to 129 (AHS). Aspartate 158 lines the Mg(2+) pocket. Thiamine diphosphate contacts are provided by residues 159 to 160 (GA), asparagine 188, tyrosine 295, and glutamate 377. Asparagine 188 provides a ligand contact to Mg(2+).

Belongs to the transketolase family. DXPS subfamily. Homodimer. It depends on Mg(2+) as a cofactor. Thiamine diphosphate is required as a cofactor.

It catalyses the reaction D-glyceraldehyde 3-phosphate + pyruvate + H(+) = 1-deoxy-D-xylulose 5-phosphate + CO2. It participates in metabolic intermediate biosynthesis; 1-deoxy-D-xylulose 5-phosphate biosynthesis; 1-deoxy-D-xylulose 5-phosphate from D-glyceraldehyde 3-phosphate and pyruvate: step 1/1. Catalyzes the acyloin condensation reaction between C atoms 2 and 3 of pyruvate and glyceraldehyde 3-phosphate to yield 1-deoxy-D-xylulose-5-phosphate (DXP). This Burkholderia ambifaria (strain ATCC BAA-244 / DSM 16087 / CCUG 44356 / LMG 19182 / AMMD) (Burkholderia cepacia (strain AMMD)) protein is 1-deoxy-D-xylulose-5-phosphate synthase.